The sequence spans 1182 residues: MDDNEEKKLDENKISKVLSSIPEQYHKTSFQARRTALDYMRSSNRKELLNQIGDWLDEVNVETDNIVDVYFQGFNKSIHNYSRILEFMGTSHGNALLMSKEVEETNKLINFNGTGIERLWKRNLEYYYMIEILEKMEELKKVPDLLNKYIKGNHFVHAANILVNSISTLNERDLVNVNALMDLRQMLVEKKESFKDMLVEKLNDHIYLKTKSSLKAFEYDDENNLQSNFKKILLSNKNSNSNNSNNTFKSPLPPTTTSPFKPQFTGAFQTKASQEKAEKAAANLYNQERLSQSNQPEVLKLEEISKTSNSKEDLNIDPEQDGKLFMTLLVEALNVLEYLSPAVGLILGRISIELKTAITNSITLITNVYHSEGRVIPKMPGESSNSSNGSNGSNGGGNNSMNGSGGINGNGSTASSSSPTSSTSSNIGANGLSPSVLSKNSHIGSATFSNIDEYSAAFNFLTETFNRNDLLANQTHNIPLVDLLKMIFNKVNMVFKNHLQLSKIFNDAIRKSELKIRANKFDFKEETEGGGGDSDNDFEGTPKPTKLQKSKVEIADVYDASLVWEIIQKEIREMLRVHLQDTSSLLLSTKSRLNPDGTESNSGKSQRLFSFTNSIVTDNWNGSISPMVTTSPTSPNGTSGADAIDSNSGGPAVISIFKASQYNVTPIYPMIVKFTDHLDKTLRDRTGTPTTTKTTTTITTTTTNSYHNQNSKKGLLRLYIDDFVHRNFLQHIKNDYKDRFAHSIESTEAFKPLERYKLVFRLKETKPILNSTLQIFQFVIELFSDIVAMSHYVVEFGAIIQVSLLRYYEKCLSKFSQEIDPTLTNQLLNTDLYKYLLASLAVSSKKQDVAKFQDSREEEYEFKLESDLFNHPEKPVLKNQLILNIEKLTMLANMSHSLNWLADKIVQLLIVQEDQKEKYTQQQQQQQQQQQQVDSIKTPSKLNSGINSGGNSTASNKENNSTTTGSNNFIGTFNQMSAESIEALKTMEEPIKDIAQRFKDLSKRCLLALRIEYRIHCFYFLEGFKRAQYMCEEERTDPDSFIVELNKDLSASEEMMSIYLTSDKCNFLFSGIAKLIGKLLISKLVHVNSINDNGVAKLCKNVFTLQQNLSNIIVKREIFFDRIRQFYQALSAEDELLNYLLEKMSQPFFSLEEGKIIIDFLQRTKRISPNAILTLEAKYKNM.

Positions Asn236 to Ser250 are enriched in low complexity. Disordered regions lie at residues Asn236–Pro262, Ile376–Ile427, Glu525–Thr545, and Gln921–Asn968. The span at Gly392–Gly409 shows a compositional bias: gly residues. Over residues Asn410–Asn426 the composition is skewed to low complexity. Residues Gln921–Gln932 show a composition bias toward low complexity. Residues Val933–Asn968 show a composition bias toward polar residues.

This sequence belongs to the SEC8 family. In terms of assembly, the exocyst complex is composed of sec3/exoc1, sec5/exoc2, sec6/exoc3, sec8/exoc4, sec10/exoc5, sec15/exoc6, exo70/exoc7 and exo84/exoc8.

It localises to the midbody. Its subcellular location is the midbody ring. The protein resides in the cell projection. It is found in the cytoplasm. The protein localises to the cytoskeleton. It localises to the microtubule organizing center. Its subcellular location is the centrosome. Component of the exocyst complex involved in the docking of exocytic vesicles with fusion sites on the plasma membrane. The chain is Exocyst complex component 4 (exoc4) from Dictyostelium discoideum (Social amoeba).